The sequence spans 416 residues: Putative competence-damage inducible protein (416 aa).

Belongs to the CinA family.

This Bacillus velezensis (strain DSM 23117 / BGSC 10A6 / LMG 26770 / FZB42) (Bacillus amyloliquefaciens subsp. plantarum) protein is Putative competence-damage inducible protein.